The primary structure comprises 295 residues: Malonyl-[acyl-carrier protein] O-methyltransferase (295 aa).

It belongs to the methyltransferase superfamily.

It catalyses the reaction malonyl-[ACP] + S-adenosyl-L-methionine = malonyl-[ACP] methyl ester + S-adenosyl-L-homocysteine. The protein operates within cofactor biosynthesis; biotin biosynthesis. In terms of biological role, converts the free carboxyl group of a malonyl-thioester to its methyl ester by transfer of a methyl group from S-adenosyl-L-methionine (SAM). It allows to synthesize pimeloyl-ACP via the fatty acid synthetic pathway. This chain is Malonyl-[acyl-carrier protein] O-methyltransferase, found in Halorhodospira halophila (strain DSM 244 / SL1) (Ectothiorhodospira halophila (strain DSM 244 / SL1)).